Consider the following 115-residue polypeptide: T cell receptor beta variable 18 (115 aa).

The first 21 residues, 1–21 (MDTRLLCCAVICLLGAGLSNA), serve as a signal peptide directing secretion. One can recognise an Ig-like domain in the interval 22-115 (GVMQNPRHLV…SAAYFCASSP (94 aa)). Residues C42 and C111 are joined by a disulfide bond.

In terms of assembly, alpha-beta TR is a heterodimer composed of an alpha and beta chain; disulfide-linked. The alpha-beta TR is associated with the transmembrane signaling CD3 coreceptor proteins to form the TR-CD3 (TcR or TCR). The assembly of alpha-beta TR heterodimers with CD3 occurs in the endoplasmic reticulum where a single alpha-beta TR heterodimer associates with one CD3D-CD3E heterodimer, one CD3G-CD3E heterodimer and one CD247 homodimer forming a stable octameric structure. CD3D-CD3E and CD3G-CD3E heterodimers preferentially associate with TR alpha and TR beta chains, respectively. The association of the CD247 homodimer is the last step of TcR assembly in the endoplasmic reticulum and is required for transport to the cell surface.

It is found in the cell membrane. Functionally, v region of the variable domain of T cell receptor (TR) beta chain that participates in the antigen recognition. Alpha-beta T cell receptors are antigen specific receptors which are essential to the immune response and are present on the cell surface of T lymphocytes. Recognize peptide-major histocompatibility (MH) (pMH) complexes that are displayed by antigen presenting cells (APC), a prerequisite for efficient T cell adaptive immunity against pathogens. Binding of alpha-beta TR to pMH complex initiates TR-CD3 clustering on the cell surface and intracellular activation of LCK that phosphorylates the ITAM motifs of CD3G, CD3D, CD3E and CD247 enabling the recruitment of ZAP70. In turn ZAP70 phosphorylates LAT, which recruits numerous signaling molecules to form the LAT signalosome. The LAT signalosome propagates signal branching to three major signaling pathways, the calcium, the mitogen-activated protein kinase (MAPK) kinase and the nuclear factor NF-kappa-B (NF-kB) pathways, leading to the mobilization of transcription factors that are critical for gene expression and essential for T cell growth and differentiation. The T cell repertoire is generated in the thymus, by V-(D)-J rearrangement. This repertoire is then shaped by intrathymic selection events to generate a peripheral T cell pool of self-MH restricted, non-autoaggressive T cells. Post-thymic interaction of alpha-beta TR with the pMH complexes shapes TR structural and functional avidity. The chain is T cell receptor beta variable 18 from Homo sapiens (Human).